The following is a 318-amino-acid chain: Transaldolase (318 aa).

The active-site Schiff-base intermediate with substrate is the Lys-132.

This sequence belongs to the transaldolase family. Type 1 subfamily. In terms of assembly, homodimer.

It is found in the cytoplasm. The catalysed reaction is D-sedoheptulose 7-phosphate + D-glyceraldehyde 3-phosphate = D-erythrose 4-phosphate + beta-D-fructose 6-phosphate. The protein operates within carbohydrate degradation; pentose phosphate pathway; D-glyceraldehyde 3-phosphate and beta-D-fructose 6-phosphate from D-ribose 5-phosphate and D-xylulose 5-phosphate (non-oxidative stage): step 2/3. In terms of biological role, transaldolase is important for the balance of metabolites in the pentose-phosphate pathway. The polypeptide is Transaldolase (Shewanella woodyi (strain ATCC 51908 / MS32)).